Here is a 187-residue protein sequence, read N- to C-terminus: Adenine phosphoribosyltransferase (187 aa).

Position 133-137 (133-137 (ATGGS)) interacts with AMP.

The protein belongs to the purine/pyrimidine phosphoribosyltransferase family. In terms of assembly, homodimer. Mg(2+) is required as a cofactor.

Its subcellular location is the cytoplasm. The protein localises to the nucleus. The catalysed reaction is AMP + diphosphate = 5-phospho-alpha-D-ribose 1-diphosphate + adenine. Its pathway is purine metabolism; AMP biosynthesis via salvage pathway; AMP from adenine: step 1/1. Catalyzes a salvage reaction resulting in the formation of AMP, that is energically less costly than de novo synthesis. The protein is Adenine phosphoribosyltransferase (APT1) of Eremothecium gossypii (strain ATCC 10895 / CBS 109.51 / FGSC 9923 / NRRL Y-1056) (Yeast).